We begin with the raw amino-acid sequence, 391 residues long: MRKLGPVTIDPRRHDAVLFDTTLDATQELVRQLQEVGVGTGVFGSGLDVPIVAAGRLAVRPGRCVVVSAHSAGVTAARESGFALIIGVDRTGCRDALRRDGADTVVTDLSEVSVRTGDRRMSQLPDALQALGLADGLVARQPAVFFDFDGTLSDIVEDPDAAWLAPGALEALQKLAARCPIAVLSGRDLADVTQRVGLPGIWYAGSHGFELTAPDGTHHQNDAAAAAIPVLKQAAAELRQQLGPFPGVVVEHKRFGVAVHYRNAARDRVGEVAAAVRTAEQRHALRVTTGREVIELRPDVDWDKGKTLLWVLDHLPHSGSAPLVPIYLGDDITDEDAFDVVGPHGVPIVVRHTDDGDRATAALFALDSPARVAEFTDRLARQLREAPLRAT.

Residue D147 is the Nucleophile of the active site. Mg(2+) is bound by residues D147, D149, and D330. D147–D149 is a substrate binding site.

It belongs to the trehalose phosphatase family. Requires Mg(2+) as cofactor.

It catalyses the reaction alpha,alpha-trehalose 6-phosphate + H2O = alpha,alpha-trehalose + phosphate. Its pathway is glycan biosynthesis; trehalose biosynthesis. In terms of biological role, removes the phosphate from trehalose 6-phosphate to produce free trehalose. This Mycobacterium bovis (strain ATCC BAA-935 / AF2122/97) protein is Trehalose-phosphate phosphatase (otsB).